Here is a 457-residue protein sequence, read N- to C-terminus: tRNA modification GTPase MnmE (457 aa).

Residues Arg22, Glu83, and Arg122 each contribute to the (6S)-5-formyl-5,6,7,8-tetrahydrofolate site. In terms of domain architecture, TrmE-type G spans 219–378 (GLATAIIGRP…LEEAIKALFF (160 aa)). Residue Asn229 participates in K(+) binding. GTP contacts are provided by residues 229 to 234 (NVGKSS), 248 to 254 (TDIAGTT), and 273 to 276 (DTAG). Residue Ser233 participates in Mg(2+) binding. Positions 248, 250, and 253 each coordinate K(+). Position 254 (Thr254) interacts with Mg(2+). Lys457 lines the (6S)-5-formyl-5,6,7,8-tetrahydrofolate pocket.

It belongs to the TRAFAC class TrmE-Era-EngA-EngB-Septin-like GTPase superfamily. TrmE GTPase family. As to quaternary structure, homodimer. Heterotetramer of two MnmE and two MnmG subunits. K(+) is required as a cofactor.

It localises to the cytoplasm. Its function is as follows. Exhibits a very high intrinsic GTPase hydrolysis rate. Involved in the addition of a carboxymethylaminomethyl (cmnm) group at the wobble position (U34) of certain tRNAs, forming tRNA-cmnm(5)s(2)U34. The protein is tRNA modification GTPase MnmE of Listeria innocua serovar 6a (strain ATCC BAA-680 / CLIP 11262).